The sequence spans 742 residues: Dynein axonemal intermediate chain 4 (742 aa).

WD repeat units follow at residues 462-502 (HCEC…DFPV), 511-559 (KHTS…DCND), 631-671 (GHKG…PILT), and 674-713 (NTTN…IDPV).

In terms of assembly, part of the multisubunit axonemal dynein complex formed at least of two heavy chains and a number of intermediate and light chains. Associated with axonemal dynein subunits such as, DNAH2, DNAI3, and DYNLT1.

Its subcellular location is the cytoplasm. It is found in the cytoskeleton. The protein resides in the flagellum axoneme. The protein localises to the cilium axoneme. It localises to the dynein axonemal particle. Functionally, plays a critical role in the assembly of axonemal dynein complex, thereby playing a role in ciliary motility. This Xenopus laevis (African clawed frog) protein is Dynein axonemal intermediate chain 4.